The following is a 467-amino-acid chain: Adenosylhomocysteinase (467 aa).

Substrate-binding residues include Thr-68, Asp-144, and Glu-169. 170 to 172 (TTT) serves as a coordination point for NAD(+). Substrate is bound by residues Lys-199 and Asp-203. Residues Asn-204, 233 to 238 (GYGDVG), Glu-256, Asn-305, 326 to 328 (IGH), and Asn-373 contribute to the NAD(+) site.

Belongs to the adenosylhomocysteinase family. Requires NAD(+) as cofactor.

The protein localises to the cytoplasm. It carries out the reaction S-adenosyl-L-homocysteine + H2O = L-homocysteine + adenosine. It functions in the pathway amino-acid biosynthesis; L-homocysteine biosynthesis; L-homocysteine from S-adenosyl-L-homocysteine: step 1/1. May play a key role in the regulation of the intracellular concentration of adenosylhomocysteine. This chain is Adenosylhomocysteinase, found in Acinetobacter baylyi (strain ATCC 33305 / BD413 / ADP1).